Here is a 703-residue protein sequence, read N- to C-terminus: Zinc finger protein 750 (703 aa).

The segment at 25 to 51 (YKCFQCPFTCNEKSHLFNHMKYGLCKN) adopts a CCHC-type zinc-finger fold. Positions 27, 30, 43, and 49 each coordinate Zn(2+). Disordered stretches follow at residues 64–113 (KCPK…DAKE), 350–527 (PASS…YGPM), 553–614 (WAPR…KQTA), and 630–703 (RVAD…TRVS). Polar residues predominate over residues 67–106 (KSSSLDPKQTHQPEPTSKPATSKSLLNGLSSFDPKSQQGS). Low complexity predominate over residues 352 to 361 (SSPSELNLSS). The segment covering 367 to 394 (TECEKGSPVPEAKDPSKDGQRDAEEAKM) has biased composition (basic and acidic residues). 2 stretches are compositionally biased toward polar residues: residues 410–421 (SPTNFTQTSQTF) and 456–477 (GSES…SLQA). A compositionally biased stretch (basic and acidic residues) spans 574–611 (TETKGSEDRTSRVETPQDKAHSRTTPDVHTEDSSDEQK). Residues 639–655 (QEPTRQDVPTLSATENL) are compositionally biased toward polar residues.

It is found in the nucleus. Transcription factor involved in epidermis differentiation. Required for terminal epidermal differentiation: acts downstream of p63/TP63 and activates expression of late epidermal differentiation genes. Specifically binds to the promoter of KLF4 and promotes its expression. This Mus musculus (Mouse) protein is Zinc finger protein 750 (Znf750).